The primary structure comprises 661 residues: UvrABC system protein B (661 aa).

Residues 25-178 enclose the Helicase ATP-binding domain; sequence EGILKGEKFQ…DEVIRELIRM (154 aa). An ATP-binding site is contributed by 38-45; sequence GVTGSGKT. The short motif at 91–114 is the Beta-hairpin element; sequence YYDYYQPEAYIPETDTYIEKDSSI. Positions 429–591 constitute a Helicase C-terminal domain; it reads QIDHLIGEIR…IVPQTVRKGI (163 aa). A UVR domain is found at 625 to 660; it reads EEYIKELEQQMKRFAIELEFEKAAKIRDKIFELKKL.

It belongs to the UvrB family. As to quaternary structure, forms a heterotetramer with UvrA during the search for lesions. Interacts with UvrC in an incision complex.

The protein resides in the cytoplasm. Its function is as follows. The UvrABC repair system catalyzes the recognition and processing of DNA lesions. A damage recognition complex composed of 2 UvrA and 2 UvrB subunits scans DNA for abnormalities. Upon binding of the UvrA(2)B(2) complex to a putative damaged site, the DNA wraps around one UvrB monomer. DNA wrap is dependent on ATP binding by UvrB and probably causes local melting of the DNA helix, facilitating insertion of UvrB beta-hairpin between the DNA strands. Then UvrB probes one DNA strand for the presence of a lesion. If a lesion is found the UvrA subunits dissociate and the UvrB-DNA preincision complex is formed. This complex is subsequently bound by UvrC and the second UvrB is released. If no lesion is found, the DNA wraps around the other UvrB subunit that will check the other stand for damage. The protein is UvrABC system protein B of Caldicellulosiruptor saccharolyticus (strain ATCC 43494 / DSM 8903 / Tp8T 6331).